The chain runs to 320 residues: Cytochrome f (320 aa).

An N-terminal signal peptide occupies residues 1–35; the sequence is MQTRNTFSWIREEITRSISVSLIIYIITWASISSA. Positions 36, 56, 59, and 60 each coordinate heme. A helical transmembrane segment spans residues 286 to 305; it reads VQGLLFFLGSVVLAQIFLVL.

This sequence belongs to the cytochrome f family. In terms of assembly, the 4 large subunits of the cytochrome b6-f complex are cytochrome b6, subunit IV (17 kDa polypeptide, petD), cytochrome f and the Rieske protein, while the 4 small subunits are PetG, PetL, PetM and PetN. The complex functions as a dimer. The cofactor is heme.

The protein localises to the plastid. Its subcellular location is the chloroplast thylakoid membrane. Component of the cytochrome b6-f complex, which mediates electron transfer between photosystem II (PSII) and photosystem I (PSI), cyclic electron flow around PSI, and state transitions. This chain is Cytochrome f (petA), found in Arabidopsis thaliana (Mouse-ear cress).